The following is a 272-amino-acid chain: Ribosomal RNA large subunit methyltransferase E (272 aa).

Positions 50, 52, 68, 84, and 109 each coordinate S-adenosyl-L-methionine. Lysine 149 acts as the Proton acceptor in catalysis. The 59-residue stretch at 196–254 folds into the TRAM domain; that stretch reads PLRRGDKFVVDIEKLGSGGDGAVLIEGFVVFVKEVEVGEKVRIKIADVKPNFAFADVEE.

The protein belongs to the class I-like SAM-binding methyltransferase superfamily. RNA methyltransferase RlmE family.

It localises to the cytoplasm. It carries out the reaction uridine(2552) in 23S rRNA + S-adenosyl-L-methionine = 2'-O-methyluridine(2552) in 23S rRNA + S-adenosyl-L-homocysteine + H(+). In terms of biological role, specifically methylates the uridine in position 2552 of 23S rRNA at the 2'-O position of the ribose in the fully assembled 50S ribosomal subunit. The chain is Ribosomal RNA large subunit methyltransferase E from Methanosarcina acetivorans (strain ATCC 35395 / DSM 2834 / JCM 12185 / C2A).